Here is a 139-residue protein sequence, read N- to C-terminus: Nucleoside diphosphate kinase (139 aa).

Residues K10, F58, R86, T92, R104, and N114 each coordinate ATP. The active-site Pros-phosphohistidine intermediate is the H117.

Belongs to the NDK family. Homotetramer. Mg(2+) serves as cofactor.

Its subcellular location is the cytoplasm. The catalysed reaction is a 2'-deoxyribonucleoside 5'-diphosphate + ATP = a 2'-deoxyribonucleoside 5'-triphosphate + ADP. It catalyses the reaction a ribonucleoside 5'-diphosphate + ATP = a ribonucleoside 5'-triphosphate + ADP. In terms of biological role, major role in the synthesis of nucleoside triphosphates other than ATP. The ATP gamma phosphate is transferred to the NDP beta phosphate via a ping-pong mechanism, using a phosphorylated active-site intermediate. In Rhodococcus erythropolis (strain PR4 / NBRC 100887), this protein is Nucleoside diphosphate kinase.